A 1040-amino-acid chain; its full sequence is Multidrug resistance protein MdtB (1040 aa).

The next 12 helical transmembrane spans lie at Phe16–Ile36, Leu347–Ala367, Ile369–Leu389, Leu396–Ile416, Ile440–Phe460, Phe472–Pro492, Trp537–Ile557, Leu863–Ile883, Phe888–Ala908, Ile911–Val931, Ile968–Val988, and Ile998–Ile1018.

This sequence belongs to the resistance-nodulation-cell division (RND) (TC 2.A.6) family. MdtB subfamily. In terms of assembly, part of a tripartite efflux system composed of MdtA, MdtB and MdtC. MdtB forms a heteromultimer with MdtC.

The protein resides in the cell inner membrane. In Shigella sonnei (strain Ss046), this protein is Multidrug resistance protein MdtB.